The primary structure comprises 155 residues: Endoribonuclease YbeY (155 aa).

Residues His-114, His-118, and His-124 each coordinate Zn(2+).

It belongs to the endoribonuclease YbeY family. Requires Zn(2+) as cofactor.

It localises to the cytoplasm. In terms of biological role, single strand-specific metallo-endoribonuclease involved in late-stage 70S ribosome quality control and in maturation of the 3' terminus of the 16S rRNA. This chain is Endoribonuclease YbeY, found in Escherichia coli O7:K1 (strain IAI39 / ExPEC).